Consider the following 185-residue polypeptide: Small ribosomal subunit protein uS7 (185 aa).

The protein belongs to the universal ribosomal protein uS7 family. In terms of assembly, part of the 30S ribosomal subunit.

In terms of biological role, one of the primary rRNA binding proteins, it binds directly to 16S rRNA where it nucleates assembly of the head domain of the 30S subunit. Is located at the subunit interface close to the decoding center. This chain is Small ribosomal subunit protein uS7, found in Methanothrix thermoacetophila (strain DSM 6194 / JCM 14653 / NBRC 101360 / PT) (Methanosaeta thermophila).